Here is a 370-residue protein sequence, read N- to C-terminus: UDP-N-acetylglucosamine--N-acetylmuramyl-(pentapeptide) pyrophosphoryl-undecaprenol N-acetylglucosamine transferase (370 aa).

Residues 15–17 (TGG), Asn-129, Arg-170, Ser-200, Ile-253, and Gln-298 contribute to the UDP-N-acetyl-alpha-D-glucosamine site.

This sequence belongs to the glycosyltransferase 28 family. MurG subfamily.

The protein localises to the cell inner membrane. The catalysed reaction is di-trans,octa-cis-undecaprenyl diphospho-N-acetyl-alpha-D-muramoyl-L-alanyl-D-glutamyl-meso-2,6-diaminopimeloyl-D-alanyl-D-alanine + UDP-N-acetyl-alpha-D-glucosamine = di-trans,octa-cis-undecaprenyl diphospho-[N-acetyl-alpha-D-glucosaminyl-(1-&gt;4)]-N-acetyl-alpha-D-muramoyl-L-alanyl-D-glutamyl-meso-2,6-diaminopimeloyl-D-alanyl-D-alanine + UDP + H(+). It functions in the pathway cell wall biogenesis; peptidoglycan biosynthesis. Functionally, cell wall formation. Catalyzes the transfer of a GlcNAc subunit on undecaprenyl-pyrophosphoryl-MurNAc-pentapeptide (lipid intermediate I) to form undecaprenyl-pyrophosphoryl-MurNAc-(pentapeptide)GlcNAc (lipid intermediate II). The chain is UDP-N-acetylglucosamine--N-acetylmuramyl-(pentapeptide) pyrophosphoryl-undecaprenol N-acetylglucosamine transferase from Salinibacter ruber (strain DSM 13855 / M31).